The following is a 324-amino-acid chain: Aprataxin (324 aa).

One can recognise an FHA-like domain in the interval 23–72 (SVTLGRGPDTKIKDKKCSREQVELRADCNRGFVTVKQLGVNPTLVDDVVV). Positions 100–160 (TEDTSRSKPS…QGLKASMQDP (61 aa)) are disordered. The segment covering 111–125 (RAQQIQSPTKTTADV) has biased composition (polar residues). An HIT domain is found at 150 to 255 (SQGLKASMQD…ISQDFDSPCL (106 aa)). Interaction with DNA substrate stretches follow at residues 175–179 (DKYPK) and 237–238 (SM). The Histidine triad motif motif lies at 240 to 244 (HVHLH). The active-site Tele-AMP-histidine intermediate is His242. A C2H2-type zinc finger spans residues 299–321 (LRCHVCGKEQTTIPKLKDHLKTH).

It is found in the nucleus. The protein resides in the nucleoplasm. Its subcellular location is the nucleolus. The catalysed reaction is a 5'-end adenosine-5'-diphospho-5'-2'-deoxyribonucleoside-DNA + H2O = a 5'-end 5'-phospho-2'-deoxyribonucleoside-DNA + AMP + 2 H(+). The enzyme catalyses a 5'-end adenosine-5'-diphospho-5'-ribonucleoside-2'-deoxyribonucleotide-DNA + H2O = a 5'-end 5'-phospho-ribonucleoside-2'-deoxyribonucleotide-DNA + AMP + 2 H(+). It carries out the reaction a 3'-end 2'-deoxyribonucleotide-3'-diphospho-5'-guanosine-DNA + H2O = a 3'-end 2'-deoxyribonucleotide 3'-phosphate-DNA + GMP + 2 H(+). Its function is as follows. DNA-binding protein involved in single-strand DNA break repair, double-strand DNA break repair and base excision repair. Resolves abortive DNA ligation intermediates formed either at base excision sites, or when DNA ligases attempt to repair non-ligatable breaks induced by reactive oxygen species. Catalyzes the release of adenylate groups covalently linked to 5'-phosphate termini, resulting in the production of 5'-phosphate termini that can be efficiently rejoined. Also able to hydrolyze adenosine 5'-monophosphoramidate (AMP-NH(2)) and diadenosine tetraphosphate (AppppA), but with lower catalytic activity. Likewise, catalyzes the release of 3'-linked guanosine (DNAppG) and inosine (DNAppI) from DNA, but has higher specific activity with 5'-linked adenosine (AppDNA). In Danio rerio (Zebrafish), this protein is Aprataxin (aptx).